Consider the following 115-residue polypeptide: uncharacterized protein (115 aa).

Residues 36 to 56 (SFFSLGLIACFCIFLIIVLSE) traverse the membrane as a helical segment.

It is found in the membrane. This is an uncharacterized protein from Saccharomyces cerevisiae (strain ATCC 204508 / S288c) (Baker's yeast).